A 239-amino-acid chain; its full sequence is MRPSGRKTDQMRKVSFERNFSKHAEGSCLVKFGDTHVLCTASLEDKTPPWLRNTGKGWVTAEYGMLPRATGERMKREAAAGKQGGRTQEIQRLIGRSLRAVVDLQALGERQITLDCDVIQADGGTRTASITGGWIALYDCLKWMESRNMIKVDRVLKDHVAAISCGVFASQAVIDLDYLEDSSAETDANFVMTGAGGIVEIQGTAEGTPFTEEEFTSLMGLAKNGIGELVALQKQAIAG.

Phosphate is bound by residues R86 and 124 to 126; that span reads GTR.

The protein belongs to the RNase PH family. In terms of assembly, homohexameric ring arranged as a trimer of dimers.

The catalysed reaction is tRNA(n+1) + phosphate = tRNA(n) + a ribonucleoside 5'-diphosphate. Functionally, phosphorolytic 3'-5' exoribonuclease that plays an important role in tRNA 3'-end maturation. Removes nucleotide residues following the 3'-CCA terminus of tRNAs; can also add nucleotides to the ends of RNA molecules by using nucleoside diphosphates as substrates, but this may not be physiologically important. Probably plays a role in initiation of 16S rRNA degradation (leading to ribosome degradation) during starvation. The chain is Ribonuclease PH from Rhizobium etli (strain CIAT 652).